We begin with the raw amino-acid sequence, 357 residues long: 4-hydroxymandelate oxidase (357 aa).

One can recognise an FMN hydroxy acid dehydrogenase domain in the interval 1-357 (MTYVSLADLE…RRLNTKLGVV (357 aa)). Gln-126 serves as a coordination point for FMN. Tyr-128 is an a 2-oxocarboxylate binding site. Thr-154 is a binding site for FMN. Arg-163 serves as a coordination point for a 2-oxocarboxylate. Lys-228 is a binding site for FMN. Residue His-252 is the Proton acceptor of the active site. Residue Arg-255 participates in a 2-oxocarboxylate binding. Residues 283-287 (DGGIR) and 306-307 (GR) each bind FMN.

Belongs to the FMN-dependent alpha-hydroxy acid dehydrogenase family. The cofactor is FMN.

The enzyme catalyses (S)-4-hydroxymandelate + O2 = 4-hydroxyphenylglyoxylate + H2O2. Its pathway is antibiotic biosynthesis; vancomycin biosynthesis. Its function is as follows. Catalyzes the oxidation of p-hydroxymandelate to p-hydroxybenzoylformate in the biosynthesis of L-(4-hydroxyphenyl)glycine and L-(3,5-dihydroxyphenyl)glycine, 2 non-proteinogenic amino acids occurring in the vancomycin group of antibiotics. The sequence is that of 4-hydroxymandelate oxidase (hmo) from Amycolatopsis orientalis (Nocardia orientalis).